We begin with the raw amino-acid sequence, 281 residues long: Phosphatidylglycerol--prolipoprotein diacylglyceryl transferase (281 aa).

The next 4 helical transmembrane spans lie at 23 to 43 (IGPL…LFAW), 71 to 91 (FVIW…VLFY), 107 to 127 (WDGG…MILF), and 133 to 153 (ILVW…LGVV). Arginine 154 provides a ligand contact to a 1,2-diacyl-sn-glycero-3-phospho-(1'-sn-glycerol). 3 consecutive transmembrane segments (helical) span residues 189-209 (LYEA…LVWG), 217-237 (GFVA…VEFF), and 247-267 (LFGG…LLGL).

The protein belongs to the Lgt family.

The protein resides in the cell inner membrane. The enzyme catalyses L-cysteinyl-[prolipoprotein] + a 1,2-diacyl-sn-glycero-3-phospho-(1'-sn-glycerol) = an S-1,2-diacyl-sn-glyceryl-L-cysteinyl-[prolipoprotein] + sn-glycerol 1-phosphate + H(+). Its pathway is protein modification; lipoprotein biosynthesis (diacylglyceryl transfer). Its function is as follows. Catalyzes the transfer of the diacylglyceryl group from phosphatidylglycerol to the sulfhydryl group of the N-terminal cysteine of a prolipoprotein, the first step in the formation of mature lipoproteins. This Brucella canis (strain ATCC 23365 / NCTC 10854 / RM-666) protein is Phosphatidylglycerol--prolipoprotein diacylglyceryl transferase.